Consider the following 684-residue polypeptide: DNA helicase IV (684 aa).

Residues 195–505 enclose the UvrD-like helicase ATP-binding domain; the sequence is SPLNPAQARA…CDLDTTYRFN (311 aa). Residues 216–223 and Arg503 contribute to the ATP site; that span reads AGAGSGKT.

This sequence belongs to the helicase family. UvrD subfamily.

It catalyses the reaction Couples ATP hydrolysis with the unwinding of duplex DNA by translocating in the 3'-5' direction.. The catalysed reaction is ATP + H2O = ADP + phosphate + H(+). Its function is as follows. Helicase IV catalyzes the unwinding of duplex DNA in the 3' to 5' direction with respect to the bound single strand in a reaction that is dependent upon the hydrolysis of ATP. The polypeptide is DNA helicase IV (helD) (Escherichia coli (strain K12)).